The following is a 97-amino-acid chain: uncharacterized protein (97 aa).

Over residues 1–24 (MTQKNGADRPDDYKRFSSLDKEYD) the composition is skewed to basic and acidic residues. The interval 1 to 97 (MTQKNGADRP…FEGTIDQNLD (97 aa)) is disordered. The span at 31-43 (SNTETESVNTETQ) shows a compositional bias: low complexity. Over residues 44–53 (THNKENKNDT) the composition is skewed to basic and acidic residues.

This is an uncharacterized protein from Bacillus subtilis (strain 168).